The sequence spans 152 residues: Superoxide dismutase [Cu-Zn] 5 (152 aa).

Cu cation-binding residues include His44, His46, and His61. The cysteines at positions 55 and 144 are disulfide-linked. Residues His61, His69, His78, and Asp81 each coordinate Zn(2+). Residue His118 participates in Cu cation binding.

The protein belongs to the Cu-Zn superoxide dismutase family. Cu cation is required as a cofactor. Requires Zn(2+) as cofactor.

The catalysed reaction is 2 superoxide + 2 H(+) = H2O2 + O2. Functionally, destroys radicals which are normally produced within the cells and which are toxic to biological systems. This is Superoxide dismutase [Cu-Zn] 5 (sodE) from Dictyostelium discoideum (Social amoeba).